The following is a 103-amino-acid chain: Small ubiquitin-related modifier 3 (103 aa).

Glycyl lysine isopeptide (Lys-Gly) (interchain with G-Cter in SUMO2) cross-links involve residues Lys-5 and Lys-7. Residue Lys-11 forms a Glycyl lysine isopeptide (Lys-Gly) (interchain with G-Cter in SUMO); alternate linkage. A Glycyl lysine isopeptide (Lys-Gly) (interchain with G-Cter in SUMO2); alternate cross-link involves residue Lys-11. The region spanning 15 to 92 is the Ubiquitin-like domain; sequence DHINLKVAGQ…IDVFQQQTGG (78 aa). A Glycyl lysine isopeptide (Gly-Lys) (interchain with K-? in acceptor proteins) cross-link involves residue Gly-92. Residues 93–103 constitute a propeptide that is removed on maturation; sequence VPESSLAGHSF.

This sequence belongs to the ubiquitin family. SUMO subfamily. As to quaternary structure, covalently attached to a number of proteins. Interacts with BMAL1. Interacts with USP25 (via ts SIM domain); the interaction sumoylates USP25 and inhibits its ubiquitin hydrolyzing activity. Interacts with SAE2 and UBE2I. In terms of processing, polymeric chains can be formed through Lys-11 cross-linking. Post-translationally, cleavage of precursor form by SENP1, SENP2 or SENP5 is necessary for function. In terms of tissue distribution, expressed predominantly in liver.

The protein localises to the cytoplasm. The protein resides in the nucleus. Its subcellular location is the PML body. Ubiquitin-like protein which can be covalently attached to target lysines either as a monomer or as a lysine-linked polymer. Does not seem to be involved in protein degradation and may function as an antagonist of ubiquitin in the degradation process. Plays a role in a number of cellular processes such as nuclear transport, DNA replication and repair, mitosis and signal transduction. Covalent attachment to its substrates requires prior activation by the E1 complex SAE1-SAE2 and linkage to the E2 enzyme UBE2I, and can be promoted by an E3 ligase such as PIAS1-4, RANBP2 or CBX4. Plays a role in the regulation of sumoylation status of SETX. This chain is Small ubiquitin-related modifier 3, found in Homo sapiens (Human).